Here is a 292-residue protein sequence, read N- to C-terminus: Putative sugar lactone lactonase YvrE (292 aa).

A divalent metal cation-binding residues include Glu15, Asn146, and Asp196.

It belongs to the SMP-30/CGR1 family. Requires a divalent metal cation as cofactor.

It localises to the cytoplasm. The polypeptide is Putative sugar lactone lactonase YvrE (yvrE) (Bacillus subtilis (strain 168)).